The primary structure comprises 505 residues: Deoxyguanosinetriphosphate triphosphohydrolase (505 aa).

The HD domain occupies 66–273; it reads RLTHSMEVQQ…MEAADDISYC (208 aa).

This sequence belongs to the dGTPase family. Type 1 subfamily. Homotetramer. It depends on Mg(2+) as a cofactor.

It catalyses the reaction dGTP + H2O = 2'-deoxyguanosine + triphosphate + H(+). Its function is as follows. dGTPase preferentially hydrolyzes dGTP over the other canonical NTPs. The protein is Deoxyguanosinetriphosphate triphosphohydrolase of Salmonella paratyphi A (strain AKU_12601).